Reading from the N-terminus, the 426-residue chain is Glutamate-1-semialdehyde 2,1-aminomutase (426 aa).

The residue at position 265 (K265) is an N6-(pyridoxal phosphate)lysine.

This sequence belongs to the class-III pyridoxal-phosphate-dependent aminotransferase family. HemL subfamily. As to quaternary structure, homodimer. It depends on pyridoxal 5'-phosphate as a cofactor.

It is found in the cytoplasm. It catalyses the reaction (S)-4-amino-5-oxopentanoate = 5-aminolevulinate. The protein operates within porphyrin-containing compound metabolism; protoporphyrin-IX biosynthesis; 5-aminolevulinate from L-glutamyl-tRNA(Glu): step 2/2. The chain is Glutamate-1-semialdehyde 2,1-aminomutase from Salmonella choleraesuis (strain SC-B67).